Here is a 73-residue protein sequence, read N- to C-terminus: UPF0346 protein lp_1865 (73 aa).

Belongs to the UPF0346 family.

This chain is UPF0346 protein lp_1865, found in Lactiplantibacillus plantarum (strain ATCC BAA-793 / NCIMB 8826 / WCFS1) (Lactobacillus plantarum).